A 305-amino-acid polypeptide reads, in one-letter code: UPF0282 protein Tneu_0934 (305 aa).

The protein belongs to the UPF0282 family.

The polypeptide is UPF0282 protein Tneu_0934 (Pyrobaculum neutrophilum (strain DSM 2338 / JCM 9278 / NBRC 100436 / V24Sta) (Thermoproteus neutrophilus)).